The primary structure comprises 163 residues: Small heat shock protein C4 (163 aa).

Positions 53–163 (YNNKILSPRT…QSKAKKIKIS (111 aa)) constitute a sHSP domain.

The protein belongs to the small heat shock protein (HSP20) family.

The protein is Small heat shock protein C4 (hspc4-1) of Rickettsia felis (strain ATCC VR-1525 / URRWXCal2) (Rickettsia azadi).